Here is a 266-residue protein sequence, read N- to C-terminus: Undecaprenyl-diphosphatase (266 aa).

7 helical membrane passes run 41–61 (NLAF…VVLW), 80–100 (TKYV…GVFF), 107–127 (IFGS…ALLA), 140–160 (ISMK…MPGL), 180–200 (LAQF…LLDV), 213–233 (IPAL…CVAC), and 245–265 (LIYF…CTLL).

It belongs to the UppP family.

It localises to the cell inner membrane. The catalysed reaction is di-trans,octa-cis-undecaprenyl diphosphate + H2O = di-trans,octa-cis-undecaprenyl phosphate + phosphate + H(+). Functionally, catalyzes the dephosphorylation of undecaprenyl diphosphate (UPP). Confers resistance to bacitracin. The protein is Undecaprenyl-diphosphatase of Parabacteroides distasonis (strain ATCC 8503 / DSM 20701 / CIP 104284 / JCM 5825 / NCTC 11152).